Consider the following 148-residue polypeptide: Large ribosomal subunit protein bL9 (148 aa).

The protein belongs to the bacterial ribosomal protein bL9 family.

Functionally, binds to the 23S rRNA. This Geobacter sulfurreducens (strain ATCC 51573 / DSM 12127 / PCA) protein is Large ribosomal subunit protein bL9.